Reading from the N-terminus, the 253-residue chain is Ribonuclease PH (253 aa).

Residues arginine 86 and 124–126 (GTR) each bind phosphate.

It belongs to the RNase PH family. As to quaternary structure, homohexameric ring arranged as a trimer of dimers.

The enzyme catalyses tRNA(n+1) + phosphate = tRNA(n) + a ribonucleoside 5'-diphosphate. Functionally, phosphorolytic 3'-5' exoribonuclease that plays an important role in tRNA 3'-end maturation. Removes nucleotide residues following the 3'-CCA terminus of tRNAs; can also add nucleotides to the ends of RNA molecules by using nucleoside diphosphates as substrates, but this may not be physiologically important. Probably plays a role in initiation of 16S rRNA degradation (leading to ribosome degradation) during starvation. The protein is Ribonuclease PH of Brevibacillus brevis (strain 47 / JCM 6285 / NBRC 100599).